The primary structure comprises 477 residues: Exodeoxyribonuclease 7 large subunit (477 aa).

The tract at residues 452 to 477 (KAAAAPKRVKKSPPPGTSGAQEDLFG) is disordered.

The protein belongs to the XseA family. As to quaternary structure, heterooligomer composed of large and small subunits.

The protein localises to the cytoplasm. The enzyme catalyses Exonucleolytic cleavage in either 5'- to 3'- or 3'- to 5'-direction to yield nucleoside 5'-phosphates.. Bidirectionally degrades single-stranded DNA into large acid-insoluble oligonucleotides, which are then degraded further into small acid-soluble oligonucleotides. This chain is Exodeoxyribonuclease 7 large subunit, found in Erythrobacter litoralis (strain HTCC2594).